The following is a 618-amino-acid chain: Proline--tRNA ligase (618 aa).

The protein belongs to the class-II aminoacyl-tRNA synthetase family. ProS type 1 subfamily. Homodimer.

The protein localises to the cytoplasm. It carries out the reaction tRNA(Pro) + L-proline + ATP = L-prolyl-tRNA(Pro) + AMP + diphosphate. Catalyzes the attachment of proline to tRNA(Pro) in a two-step reaction: proline is first activated by ATP to form Pro-AMP and then transferred to the acceptor end of tRNA(Pro). As ProRS can inadvertently accommodate and process non-cognate amino acids such as alanine and cysteine, to avoid such errors it has two additional distinct editing activities against alanine. One activity is designated as 'pretransfer' editing and involves the tRNA(Pro)-independent hydrolysis of activated Ala-AMP. The other activity is designated 'posttransfer' editing and involves deacylation of mischarged Ala-tRNA(Pro). The misacylated Cys-tRNA(Pro) is not edited by ProRS. The sequence is that of Proline--tRNA ligase from Streptococcus equi subsp. zooepidemicus (strain H70).